A 285-amino-acid chain; its full sequence is Dioxygenase andF (285 aa).

The Fe cation site is built by H128, D130, and H205.

This sequence belongs to the PhyH family. As to quaternary structure, homodimer. The cofactor is Fe cation.

It functions in the pathway secondary metabolite biosynthesis; terpenoid biosynthesis. Dioxygenase; part of the gene cluster that mediates the biosynthesis of anditomin, a fungal meroterpenoid. The first step of the pathway is the synthesis of 3,5-dimethylorsellinic acid (DMOA) by the polyketide synthase andM. DMOA is then converted to the phthalide compound 5,7-dihydroxy-4,6-dimethylphthalide (DHDMP) by the cytochrome P450 monooxygenase andK, which is further prenylated by the prenyltransferase andD to yield farnesyl-DHDMP. Further epoxidation by the FAD-dependent monooxygenase andE leads to epoxyfarnesyl-DHDMP. The next step involves the terpene cyclase andB that converts epoxyfarnesyl-DHDMP into preandiloid A through opening of the epoxide ring followed by the cyclization of the farnesyl moiety. Preandiloid A is in turn oxidized at the C-3 hydroxyl group to yield preandiloid B by the dehydrogenase andC. The dioxygenase andA is solely responsible for the dehydrogenation of preandiloid B leading to the enone preandiloid C, as well as for the intriguing structural rearrangement to generate the bicyclo[2.2.2]octane core, transforming preandiloid C into andiconin. FAD-binding monooxygenase andJ then produces andilesin D which is reduced by dehydrogenase andI to yield andilesin A. Action of acetyltransferase andG followed by a spontaneous acetate elimination leads then to andilesin B, which is in turn substrate of the short chain dehydrogenase andH to yield andilesin C. Finally, the dioxygenase andF catalyzes the transformation of andilesin C to anditomin. The protein is Dioxygenase andF of Emericella variicolor (Aspergillus stellatus).